Consider the following 490-residue polypeptide: Metal cation symporter ZIP14 (490 aa).

A signal peptide spans 1-28 (MELLRPALPSYFLLTLLSIWTAASEARA). Residues 29–155 (VSTGMPTISA…PSSVEVWGYG (127 aa)) lie on the Extracellular side of the membrane. N-linked (GlcNAc...) asparagine glycosylation is found at Asn-75, Asn-85, and Asn-100. Residues 127–146 (ACSSENQENEENEQTEEGRP) are disordered. The chain crosses the membrane as a helical span at residues 156 to 176 (LLCVTVISLCSLLGASVVPFM). The Cytoplasmic portion of the chain corresponds to 177–184 (KKTFYKRL). The helical transmembrane segment at 185-205 (LLYFIALAIGTLYSNALFQLI) threads the bilayer. Over 206-222 (PEAFGFNPMEDYYVSKS) the chain is Extracellular. A helical transmembrane segment spans residues 223 to 243 (AVVFGGFYLFFFTEKILKMLL). Over 244–395 (KQKNEHHHGH…LLNAGMSLQQ (152 aa)) the chain is Cytoplasmic. Residues 249–256 (HHHGHSHY) carry the HHHGHXHX-motif motif. Positions 374–379 (EEFPHE) match the XEXPHE-motif motif. The helical transmembrane segment at 396–416 (ALFFNFLSACCCYVGLGFGIL) threads the bilayer. Over 417-422 (AGSHFS) the chain is Extracellular. A helical membrane pass occupies residues 423-443 (ANWIFALAGGMFLYISLADMF). Residues 444 to 459 (PEMNEVSQEDERKGSA) lie on the Cytoplasmic side of the membrane. The chain crosses the membrane as a helical span at residues 460-480 (LIPFVIQNLGLLTGFGIMLVL). At 481–490 (TMYSGHIQIG) the chain is on the extracellular side.

The protein belongs to the ZIP transporter (TC 2.A.5) family. Homotrimer. Post-translationally, ubiquitinated. Ubiquitination occurs upon iron depletion. The ubiquitinated form undergoes proteasomal degradation. In terms of processing, N-glycosylated. N-glycosylation at Asn-100 is required for iron-regulated extraction of the transporter from membranes and subsequent proteasomal degradation.

The protein localises to the cell membrane. The protein resides in the apical cell membrane. It is found in the basolateral cell membrane. It localises to the early endosome membrane. Its subcellular location is the late endosome membrane. The protein localises to the lysosome membrane. It catalyses the reaction Zn(2+)(out) + 2 hydrogencarbonate(out) = Zn(2+)(in) + 2 hydrogencarbonate(in). The enzyme catalyses Mn(2+)(out) + 2 hydrogencarbonate(out) = Mn(2+)(in) + 2 hydrogencarbonate(in). The catalysed reaction is Fe(2+)(out) + 2 hydrogencarbonate(out) = Fe(2+)(in) + 2 hydrogencarbonate(in). It carries out the reaction Cd(2+)(out) + 2 hydrogencarbonate(out) = Cd(2+)(in) + 2 hydrogencarbonate(in). Its function is as follows. Electroneutral transporter of the plasma membrane mediating the cellular uptake of the divalent metal cations zinc, manganese and iron that are important for tissue homeostasis, metabolism, development and immunity. Functions as an energy-dependent symporter, transporting through the membranes an electroneutral complex composed of a divalent metal cation and two bicarbonate anions. Beside these endogenous cellular substrates, can also import cadmium a non-essential metal which is cytotoxic and carcinogenic. In Bos taurus (Bovine), this protein is Metal cation symporter ZIP14.